The chain runs to 288 residues: Aquaporin PIP1-5 (288 aa).

The disordered stretch occupies residues 1–36; it reads MEGKEEDVRLGANRYSERQPIGTAAQGTEEKDYKEP. 2 consecutive transmembrane segments (helical) span residues 57-77 and 92-114; these read IAEF…VMGV and IAWS…SGGH. Positions 116-118 match the NPA 1 motif; it reads NPA. The next 3 helical transmembrane spans lie at 135–155, 177–197, and 211–231; these read LFYM…VKGF, GDGL…VFSA, and ILAP…TIPI. The NPA 2 motif lies at 237 to 239; the sequence is NPA. A helical membrane pass occupies residues 259–279; it reads IFWVGPFIGAALAAIYHVVII.

It belongs to the MIP/aquaporin (TC 1.A.8) family. PIP (TC 1.A.8.11) subfamily. Highly expressed in roots and at lower levels in anthers and silks.

The protein localises to the cell membrane. Functionally, water channel required to facilitate the transport of water across cell membrane. In Zea mays (Maize), this protein is Aquaporin PIP1-5 (PIP1-5).